The chain runs to 384 residues: Succinyl-diaminopimelate desuccinylase (384 aa).

Zn(2+) is bound at residue H69. The active site involves D71. D103 provides a ligand contact to Zn(2+). E137 acts as the Proton acceptor in catalysis. Zn(2+) contacts are provided by E138, E166, and H355.

Belongs to the peptidase M20A family. DapE subfamily. Homodimer. Zn(2+) is required as a cofactor. Requires Co(2+) as cofactor.

The enzyme catalyses N-succinyl-(2S,6S)-2,6-diaminopimelate + H2O = (2S,6S)-2,6-diaminopimelate + succinate. It functions in the pathway amino-acid biosynthesis; L-lysine biosynthesis via DAP pathway; LL-2,6-diaminopimelate from (S)-tetrahydrodipicolinate (succinylase route): step 3/3. Catalyzes the hydrolysis of N-succinyl-L,L-diaminopimelic acid (SDAP), forming succinate and LL-2,6-diaminopimelate (DAP), an intermediate involved in the bacterial biosynthesis of lysine and meso-diaminopimelic acid, an essential component of bacterial cell walls. This is Succinyl-diaminopimelate desuccinylase from Rickettsia canadensis (strain McKiel).